A 256-amino-acid chain; its full sequence is Type III pantothenate kinase (256 aa).

6–13 (DIGNTHIV) contacts ATP. A substrate-binding site is contributed by 109-112 (GADR). Residue aspartate 111 is the Proton acceptor of the active site. Aspartate 132 contacts K(+). Threonine 135 is an ATP binding site. Threonine 186 provides a ligand contact to substrate.

The protein belongs to the type III pantothenate kinase family. As to quaternary structure, homodimer. Requires NH4(+) as cofactor. It depends on K(+) as a cofactor.

The protein localises to the cytoplasm. The catalysed reaction is (R)-pantothenate + ATP = (R)-4'-phosphopantothenate + ADP + H(+). The protein operates within cofactor biosynthesis; coenzyme A biosynthesis; CoA from (R)-pantothenate: step 1/5. Functionally, catalyzes the phosphorylation of pantothenate (Pan), the first step in CoA biosynthesis. This is Type III pantothenate kinase from Fusobacterium nucleatum subsp. nucleatum (strain ATCC 25586 / DSM 15643 / BCRC 10681 / CIP 101130 / JCM 8532 / KCTC 2640 / LMG 13131 / VPI 4355).